The primary structure comprises 413 residues: L-cysteine:1D-myo-inositol 2-amino-2-deoxy-alpha-D-glucopyranoside ligase (413 aa).

The segment at Met-1–Leu-21 is disordered. Cys-43 provides a ligand contact to Zn(2+). L-cysteinyl-5'-AMP is bound by residues Cys-43–Thr-46, Thr-58, and Asn-81–Thr-83. A 'HIGH' region motif is present at residues Ile-45–His-55. The short motif at Glu-187–Pro-192 is the 'ERGGDP' region element. Trp-227 is an L-cysteinyl-5'-AMP binding site. Cys-231 provides a ligand contact to Zn(2+). Gly-249–Asp-251 contacts L-cysteinyl-5'-AMP. His-256 lines the Zn(2+) pocket. Ile-283 is a binding site for L-cysteinyl-5'-AMP. The 'KMSKS' region motif lies at Lys-289–Ser-293.

It belongs to the class-I aminoacyl-tRNA synthetase family. MshC subfamily. In terms of assembly, monomer. Zn(2+) is required as a cofactor.

It carries out the reaction 1D-myo-inositol 2-amino-2-deoxy-alpha-D-glucopyranoside + L-cysteine + ATP = 1D-myo-inositol 2-(L-cysteinylamino)-2-deoxy-alpha-D-glucopyranoside + AMP + diphosphate + H(+). Its function is as follows. Catalyzes the ATP-dependent condensation of GlcN-Ins and L-cysteine to form L-Cys-GlcN-Ins. The protein is L-cysteine:1D-myo-inositol 2-amino-2-deoxy-alpha-D-glucopyranoside ligase of Rhodococcus erythropolis (strain PR4 / NBRC 100887).